The chain runs to 710 residues: Adenylosuccinate synthetase (710 aa).

Disordered stretches follow at residues 1-53 (MPVR…PQEA) and 84-110 (DEPP…SGRS). 2 stretches are compositionally biased toward polar residues: residues 10–27 (YNNS…STTA) and 101–110 (ANASNSSGRS). GTP is bound by residues 180–186 (GDEGKGK) and 210–212 (GHT). D181 serves as the catalytic Proton acceptor. Residues D181 and G210 each contribute to the Mg(2+) site. IMP contacts are provided by residues 181–184 (DEGK), 208–211 (NAGH), T295, K309, Q421, T437, and K567. H211 serves as the catalytic Proton donor. 563–569 (AVTKKPR) is a binding site for substrate. Residues R569 and 697–699 (GNG) contribute to the GTP site.

Belongs to the adenylosuccinate synthetase family. In terms of assembly, homodimer. It depends on Mg(2+) as a cofactor.

It localises to the cytoplasm. The catalysed reaction is IMP + L-aspartate + GTP = N(6)-(1,2-dicarboxyethyl)-AMP + GDP + phosphate + 2 H(+). Its pathway is purine metabolism; AMP biosynthesis via de novo pathway; AMP from IMP: step 1/2. Functionally, plays an important role in the salvage pathway for purine nucleotide biosynthesis. Catalyzes the first committed step in the biosynthesis of AMP from IMP. This is Adenylosuccinate synthetase (ADSS) from Leishmania donovani.